Reading from the N-terminus, the 361-residue chain is 4-hydroxytryptamine kinase (361 aa).

Residues asparagine 37, lysine 57, and 118–120 (QDV) contribute to the ATP site. Aspartate 224 is a catalytic residue. 248 to 250 (DWE) contacts ATP.

It belongs to the methylthioribose kinase family. As to quaternary structure, monomer. It depends on Mg(2+) as a cofactor.

It catalyses the reaction 4-hydroxytryptamine + ATP = norbaeocystin + ADP + H(+). The enzyme catalyses psilocin + ATP = psilocybin + ADP + H(+). The catalysed reaction is 4-hydroxy-N,N,N-trimethyltryptamine + ATP = aeruginascin + ADP + H(+). It participates in secondary metabolite biosynthesis. Its function is as follows. 4-hydroxytryptamine kinase; part of the gene cluster that mediates the biosynthesis of psilocybin, a psychotropic tryptamine-derived natural product. The first step in the pathway is the decarboxylation of L-tryptophan to tryptamine by the decarboxylase psiD. PsiD does not decarboxylate phenylalanine, tyrosine, or 5-hydroxy- L -tryptophan (5-HTP). 4-hydroxy-L-tryptophan is accepted as substrate by psiD as well. The cytochrome P450 monooxygenase psiH then converts tryptamine to 4-hydroxytryptamine. The kinase psiK catalyzes the 4-O-phosphorylation step by converting 4-hydroxytryptamine into norbaeocystin. The methyltransferase psiM then catalyzes iterative methyl transfer to the amino group of norbaeocystin to yield psilocybin via a monomethylated intermediate, baeocystin. 4-hydroxy-6-methyl-l-tryptophancan also be converted the decarboxylase PsiD, kinase PsiK, and methyltransferase PsiM into respectively 6-methyl-norbaeocystin, 6-methylbaeocystin, and 6-methylpsilocybin. PsiK kinase can also turn psilocin into psilocybin. This activity may represent a protective mechanism to rephosphorylate the unstable psilocin to the stable psilocybin in case of intracellular ester cleavage. Moreover, psiK is able to O-phosphorylate the quaternary amine 4-hydroxy-N,N,N-trimethyltryptamine (4-OH-TMT) to yield aeruginascin, another bioactive compound found in Psilocybe species. The chain is 4-hydroxytryptamine kinase from Psilocybe cyanescens.